Reading from the N-terminus, the 125-residue chain is Succinate dehydrogenase cytochrome b556 subunit (125 aa).

Over 1 to 22 (MNAKRPVNLDLTKFHFPPMAIL) the chain is Cytoplasmic. The helical transmembrane segment at 23-48 (SIGHRISGFVLFLCMPLMFYLLHRAT) threads the bilayer. Residues 49–65 (ASAESFYHLHQLLLHNG) lie on the Periplasmic side of the membrane. Residues 66–86 (WIKLAVWIMLSATLFHLFAGI) traverse the membrane as a helical segment. Histidine 81 contributes to the heme binding site. Residues 87-104 (RHLAMDLGFWESVPEGRI) lie on the Cytoplasmic side of the membrane. A helical membrane pass occupies residues 105–125 (SAYTVFVVSFIAIVLAGVWIW).

The protein belongs to the cytochrome b560 family. In terms of assembly, part of an enzyme complex containing four subunits: a flavoprotein, an iron-sulfur protein, plus two membrane-anchoring proteins, SdhC and SdhD. The complex can form homotrimers. Heme is required as a cofactor.

The protein resides in the cell inner membrane. It functions in the pathway carbohydrate metabolism; tricarboxylic acid cycle. Functionally, membrane-anchoring subunit of succinate dehydrogenase (SDH). This Coxiella burnetii (strain RSA 493 / Nine Mile phase I) protein is Succinate dehydrogenase cytochrome b556 subunit (sdhC).